Reading from the N-terminus, the 316-residue chain is 4-hydroxy-3-methylbut-2-enyl diphosphate reductase (316 aa).

Cys-12 contributes to the [4Fe-4S] cluster binding site. (2E)-4-hydroxy-3-methylbut-2-enyl diphosphate is bound by residues His-41 and His-74. His-41 and His-74 together coordinate dimethylallyl diphosphate. 2 residues coordinate isopentenyl diphosphate: His-41 and His-74. Cys-96 contacts [4Fe-4S] cluster. Residue His-124 coordinates (2E)-4-hydroxy-3-methylbut-2-enyl diphosphate. A dimethylallyl diphosphate-binding site is contributed by His-124. Position 124 (His-124) interacts with isopentenyl diphosphate. Glu-126 acts as the Proton donor in catalysis. Residue Thr-169 coordinates (2E)-4-hydroxy-3-methylbut-2-enyl diphosphate. Cys-199 serves as a coordination point for [4Fe-4S] cluster. The (2E)-4-hydroxy-3-methylbut-2-enyl diphosphate site is built by Ser-227, Ser-228, Asn-229, and Ser-271. Positions 227, 228, 229, and 271 each coordinate dimethylallyl diphosphate. The isopentenyl diphosphate site is built by Ser-227, Ser-228, Asn-229, and Ser-271.

It belongs to the IspH family. [4Fe-4S] cluster is required as a cofactor.

The catalysed reaction is isopentenyl diphosphate + 2 oxidized [2Fe-2S]-[ferredoxin] + H2O = (2E)-4-hydroxy-3-methylbut-2-enyl diphosphate + 2 reduced [2Fe-2S]-[ferredoxin] + 2 H(+). It carries out the reaction dimethylallyl diphosphate + 2 oxidized [2Fe-2S]-[ferredoxin] + H2O = (2E)-4-hydroxy-3-methylbut-2-enyl diphosphate + 2 reduced [2Fe-2S]-[ferredoxin] + 2 H(+). It functions in the pathway isoprenoid biosynthesis; dimethylallyl diphosphate biosynthesis; dimethylallyl diphosphate from (2E)-4-hydroxy-3-methylbutenyl diphosphate: step 1/1. The protein operates within isoprenoid biosynthesis; isopentenyl diphosphate biosynthesis via DXP pathway; isopentenyl diphosphate from 1-deoxy-D-xylulose 5-phosphate: step 6/6. Functionally, catalyzes the conversion of 1-hydroxy-2-methyl-2-(E)-butenyl 4-diphosphate (HMBPP) into a mixture of isopentenyl diphosphate (IPP) and dimethylallyl diphosphate (DMAPP). Acts in the terminal step of the DOXP/MEP pathway for isoprenoid precursor biosynthesis. The polypeptide is 4-hydroxy-3-methylbut-2-enyl diphosphate reductase (Xylella fastidiosa (strain M12)).